The primary structure comprises 255 residues: CD320 antigen (255 aa).

The first 29 residues, 1 to 29 (MNGWVARGLARRAAALGLGLRVLLCFGLC), serve as a signal peptide directing secretion. Residues 30–203 (LEIAPTPIQT…SVQSGNRNVY (174 aa)) lie on the Extracellular side of the membrane. LDL-receptor class A domains are found at residues 52–89 (SCPP…EECG) and 120–157 (SCPE…LGCG). Disulfide bonds link C53–C66, C60–C79, C73–C88, C121–C134, C128–C147, and C141–C156. Ca(2+) contacts are provided by W71, D74, D76, D78, D84, and E85. W139, D142, H144, D146, D152, and E153 together coordinate Ca(2+). 2 N-linked (GlcNAc...) asparagine glycosylation sites follow: N177 and N183. Residues 204 to 224 (GIIAAVAVLSISLAAGILFAL) form a helical membrane-spanning segment. Residues 225-255 (SRLCAQGCLAPLGLLVSMKGSLQPEKKTSVL) lie on the Cytoplasmic side of the membrane.

As to quaternary structure, interacts (via LDL-receptor class A domains) with TCN2.

Its subcellular location is the cell membrane. Functionally, receptor for transcobalamin saturated with cobalamin (TCbl). Plays an important role in cobalamin uptake. Plasma membrane protein that is expressed on follicular dendritic cells (FDC) and mediates interaction with germinal center B cells. Functions as a costimulator to promote B cell responses to antigenic stimuli; promotes B cell differentiation and proliferation. Germinal center-B (GC-B) cells differentiate into memory B-cells and plasma cells (PC) through interaction with T-cells and follicular dendritic cells (FDC). CD320 augments the proliferation of PC precursors generated by IL-10. In Bos taurus (Bovine), this protein is CD320 antigen (CD320).